Reading from the N-terminus, the 187-residue chain is Ribosome-recycling factor (187 aa).

The protein belongs to the RRF family.

It is found in the cytoplasm. Functionally, responsible for the release of ribosomes from messenger RNA at the termination of protein biosynthesis. May increase the efficiency of translation by recycling ribosomes from one round of translation to another. In Bradyrhizobium sp. (strain BTAi1 / ATCC BAA-1182), this protein is Ribosome-recycling factor.